The following is a 141-amino-acid chain: Hemoglobin subunit alpha (141 aa).

The region spanning 1–141 (VLSAADKANV…VSTVLTSKYR (141 aa)) is the Globin domain. S3 is modified (phosphoserine). K7 and K11 each carry N6-succinyllysine. K16 is modified (N6-acetyllysine; alternate). K16 carries the N6-succinyllysine; alternate modification. An N6-succinyllysine modification is found at K40. Residue S49 is modified to Phosphoserine. H58 contacts O2. H87 lines the heme b pocket. S102 carries the phosphoserine modification. Phosphothreonine is present on T108. Phosphoserine is present on S124. Residues T134 and T137 each carry the phosphothreonine modification. Position 138 is a phosphoserine (S138).

Belongs to the globin family. Heterotetramer of two alpha chains and two beta chains. In terms of tissue distribution, red blood cells.

In terms of biological role, involved in oxygen transport from the lung to the various peripheral tissues. Its function is as follows. Hemopressin acts as an antagonist peptide of the cannabinoid receptor CNR1. Hemopressin-binding efficiently blocks cannabinoid receptor CNR1 and subsequent signaling. The sequence is that of Hemoglobin subunit alpha (HBA) from Sus scrofa (Pig).